We begin with the raw amino-acid sequence, 175 residues long: UPF0398 protein SPP_0409 (175 aa).

Belongs to the UPF0398 family.

The polypeptide is UPF0398 protein SPP_0409 (Streptococcus pneumoniae (strain P1031)).